The primary structure comprises 293 residues: Putative phosphoenolpyruvate synthase regulatory protein (293 aa).

Residue 173 to 180 coordinates ADP; that stretch reads GVSRCGKT.

It belongs to the pyruvate, phosphate/water dikinase regulatory protein family. PSRP subfamily.

It carries out the reaction [pyruvate, water dikinase] + ADP = [pyruvate, water dikinase]-phosphate + AMP + H(+). It catalyses the reaction [pyruvate, water dikinase]-phosphate + phosphate + H(+) = [pyruvate, water dikinase] + diphosphate. Its function is as follows. Bifunctional serine/threonine kinase and phosphorylase involved in the regulation of the phosphoenolpyruvate synthase (PEPS) by catalyzing its phosphorylation/dephosphorylation. The chain is Putative phosphoenolpyruvate synthase regulatory protein from Photorhabdus laumondii subsp. laumondii (strain DSM 15139 / CIP 105565 / TT01) (Photorhabdus luminescens subsp. laumondii).